An 83-amino-acid polypeptide reads, in one-letter code: Turripeptide Lol11.1 (83 aa).

A signal peptide spans 1–27 (MARQMMTVGCLILIVVLLDMMVPVFNT).

The protein belongs to the conopeptide I2-like superfamily. Post-translationally, contains 4 disulfide bonds. As to expression, expressed by the venom duct.

Its subcellular location is the secreted. Acts as a neurotoxin by inhibiting voltage-gated potassium channels (Kv). The chain is Turripeptide Lol11.1 from Iotyrris olangoensis (Sea snail).